Consider the following 208-residue polypeptide: MSFNFTKDFLYSGKVYGLFYKGISVGRLEFNGGSVKITSGYIAIFPNYAPTEAKSGNILLTNVAKGSIRYSYNGADCAGWFIHSVEVAEISKLARPLLDAICYRHVYVGKPGIVANYFVDGDTSKCVVRSIEPFTLVCDPRDVTAGQVLEKNLSTMTVVSVANKVKFNPKGNLTLYIFNTTLRGNDLFDSAHHSVWDCKGGEFYRQSQ.

This Pea early browning virus protein is 23 kDa protein.